Here is an 86-residue protein sequence, read N- to C-terminus: Apolipoprotein C-I (86 aa).

Positions Met1–Gly26 are cleaved as a signal peptide.

This sequence belongs to the apolipoprotein C1 family.

The protein localises to the secreted. Its function is as follows. Inhibitor of lipoprotein binding to the low density lipoprotein (LDL) receptor, LDL receptor-related protein, and very low density lipoprotein (VLDL) receptor. Associates with high density lipoproteins (HDL) and the triacylglycerol-rich lipoproteins in the plasma and makes up about 10% of the protein of the VLDL and 2% of that of HDL. Appears to interfere directly with fatty acid uptake and is also the major plasma inhibitor of cholesteryl ester transfer protein (CETP). Binds free fatty acids and reduces their intracellular esterification. Modulates the interaction of APOE with beta-migrating VLDL and inhibits binding of beta-VLDL to the LDL receptor-related protein. This chain is Apolipoprotein C-I (APOC1), found in Saimiri boliviensis boliviensis (Bolivian squirrel monkey).